The chain runs to 440 residues: MSYFEHIPAIRYEGPQSDNPLAYHHYDPDKRVLGKTLAEHLRIAVCYWHTFVWPGHDIFGQGAFQRPWQQPGDALERARQKADAAFEFFTKLGTPFYTFHDTDVAPEGDSLRDYAANFARMVDYLGERQQASGVRLLWGTANLFSHPRFAAGAATNPNPDVFAWAATQVCHALDATHRLGGENYVLWGGREGYETLLNTDLKRERDQFARFLSMVVEHKHRIGFKGALLIEPKPQEPTKHQYDYDVATVHGFLVQYGLQNEIRVNIEANHATLAGHSFHHEIANAFALGVFGSVDANRGDPQNGWDTDQFPNSVEELTLAFYEILRHGGFTTGGMNFDAKVRRQSIDPEDLFYGHVGAIDVLALALERAAVLVENDRLDALRRQRYAQWDDAFGRKILSGGYTLESLAADALARGVNPRHASGAQERLENIVNQAIYGLR.

Residues His100 and Asp103 contribute to the active site. Residues Glu231, Glu267, His270, Asp295, Asp306, Asp308, and Asp338 each coordinate Mg(2+).

This sequence belongs to the xylose isomerase family. As to quaternary structure, homotetramer. Mg(2+) serves as cofactor.

The protein resides in the cytoplasm. The catalysed reaction is alpha-D-xylose = alpha-D-xylulofuranose. The chain is Xylose isomerase from Burkholderia cenocepacia (strain HI2424).